The sequence spans 601 residues: FAD-binding monooxygenase stcW (601 aa).

FAD is bound by residues 42–43, E64, W73, D84, Y90, and V133; that span reads FS.

This sequence belongs to the FAD-binding monooxygenase family. FAD is required as a cofactor.

The protein operates within mycotoxin biosynthesis; sterigmatocystin biosynthesis. In terms of biological role, FAD-binding monooxygenase; part of the gene cluster that mediates the biosynthesis of sterigmatocystin (ST), a polyketide-derived furanocoumarin which is part of the most toxic and carcinogenic compounds among the known mycotoxins. The first step in the biosynthesis of sterigmatocystin is the production of hexanoate by the fatty acid synthase (FAS) units stcJ and stcK. The polyketide backbone is assembled by the non-reducing polyketide synthase stcA by condensation of the starter hexanoyl-CoA and 7 malonyl-CoA extender units followed by cyclization and release of norsolorinic acid. Norsolorinic acid is the first stable intermediate in the biosynthesis of sterigmatocystin and is converted into averantin (AVN) by the ketoreductase stcE which reduces the hexanoate ketone to an alcohol. Averantin is then oxidized into 5'-hydroxyaverantin (HAVN) by the cytochrome P450 monooxygenase stcF. 5'-hydroxyaverantin is further converted to 5'-oxyaverantin (OAVN) by the 5'-hydroxyaverantin dehydrogenase stcG. The next step is the conversion of OAVN into averufin (AVF) which is catalyzed by a yet to be identified enzyme. The cytochrome P450 monooxygenase stcB and the flavin-binding monooxygenase stcW are both required for the conversion of averufin to 1-hydroxyversicolorone. The esterase stcI probably catalyzes the formation of versiconal hemiacetal acetate from 1-hydroxyversicolorone. The oxydoreductase stcN then probably catalyzes the biosynthetic step from versiconal to versicolorin B (VERB). The next step is performed by the versicolorin B desaturase stcL to produce versicolorin A (VERA). The ketoreductase stcU and the cytochrome P450 monooxygenase stcS are involved in the conversion of versicolorin A to demethylsterigmatocystin. The Baeyer-Villiger oxidas stcQ and the reductase stcR might be involved in the biosynthetic step from versicolorin A to demethylsterigmatocystin. The final step in the biosynthesis of sterigmatocystin is the methylation of demethylsterigmatocystin catalyzed by the methyltransferase stcP. The chain is FAD-binding monooxygenase stcW from Emericella nidulans (strain FGSC A4 / ATCC 38163 / CBS 112.46 / NRRL 194 / M139) (Aspergillus nidulans).